The following is a 167-amino-acid chain: 6,7-dimethyl-8-ribityllumazine synthase (167 aa).

5-amino-6-(D-ribitylamino)uracil contacts are provided by residues Phe24, 58–60 (ALE), and 82–84 (AVV). 87–88 (ET) is a (2S)-2-hydroxy-3-oxobutyl phosphate binding site. Residue His90 is the Proton donor of the active site. Asn115 contributes to the 5-amino-6-(D-ribitylamino)uracil binding site. Arg129 provides a ligand contact to (2S)-2-hydroxy-3-oxobutyl phosphate.

Belongs to the DMRL synthase family.

The catalysed reaction is (2S)-2-hydroxy-3-oxobutyl phosphate + 5-amino-6-(D-ribitylamino)uracil = 6,7-dimethyl-8-(1-D-ribityl)lumazine + phosphate + 2 H2O + H(+). The protein operates within cofactor biosynthesis; riboflavin biosynthesis; riboflavin from 2-hydroxy-3-oxobutyl phosphate and 5-amino-6-(D-ribitylamino)uracil: step 1/2. Functionally, catalyzes the formation of 6,7-dimethyl-8-ribityllumazine by condensation of 5-amino-6-(D-ribitylamino)uracil with 3,4-dihydroxy-2-butanone 4-phosphate. This is the penultimate step in the biosynthesis of riboflavin. The sequence is that of 6,7-dimethyl-8-ribityllumazine synthase from Cupriavidus pinatubonensis (strain JMP 134 / LMG 1197) (Cupriavidus necator (strain JMP 134)).